The chain runs to 427 residues: uncharacterized protein (427 aa).

3 helical membrane-spanning segments follow: residues 10–30, 43–63, and 71–91; these read LAYL…AGFW, KIIS…SKLA, and IFEI…SFIS. Threonine 199 carries the phosphothreonine modification. At serine 234 the chain carries Phosphoserine. 5 consecutive transmembrane segments (helical) span residues 253–273, 288–308, 327–347, 358–378, and 397–417; these read NLNP…IGPL, FAEA…VVLG, LLIG…LPII, ILDD…PPAI, and ILFW…VSGA.

The protein belongs to the auxin efflux carrier (TC 2.A.69) family.

The protein localises to the membrane. This is an uncharacterized protein from Saccharomyces cerevisiae (strain ATCC 204508 / S288c) (Baker's yeast).